The sequence spans 475 residues: Probable GABA permease (475 aa).

12 consecutive transmembrane segments (helical) span residues 27–47, 48–68, 105–125, 127–147, 163–183, 211–231, 250–270, 296–316, 345–365, 368–388, 413–433, and 438–458; these read VTML…SGHA, IAAA…LVVL, LYWW…AAIL, AWFP…LLTV, FALL…VAIV, AVLG…IVTI, VIWR…SIVP, LIVD…AIYT, PAVL…YFAP, VFTF…LVIA, PWLT…MLIM, and HEVF…LLNA.

This sequence belongs to the amino acid-polyamine-organocation (APC) superfamily. Amino acid transporter (AAT) (TC 2.A.3.1) family.

The protein resides in the membrane. In terms of biological role, involved in the degradation of beta-alanine. The chain is Probable GABA permease (bauD) from Pseudomonas aeruginosa (strain ATCC 15692 / DSM 22644 / CIP 104116 / JCM 14847 / LMG 12228 / 1C / PRS 101 / PAO1).